A 151-amino-acid polypeptide reads, in one-letter code: Ribosomal RNA large subunit methyltransferase H (151 aa).

S-adenosyl-L-methionine is bound by residues L73, G100, and 119–124 (LSKMTL).

The protein belongs to the RNA methyltransferase RlmH family. As to quaternary structure, homodimer.

The protein resides in the cytoplasm. It catalyses the reaction pseudouridine(1915) in 23S rRNA + S-adenosyl-L-methionine = N(3)-methylpseudouridine(1915) in 23S rRNA + S-adenosyl-L-homocysteine + H(+). In terms of biological role, specifically methylates the pseudouridine at position 1915 (m3Psi1915) in 23S rRNA. The sequence is that of Ribosomal RNA large subunit methyltransferase H from Campylobacter lari (strain RM2100 / D67 / ATCC BAA-1060).